A 250-amino-acid polypeptide reads, in one-letter code: MGRGRVQLKRIENKINRQVTFSKRRSGLLKKAHEISVLCDAEVGLIVFSTKGKLFEYANDSCMERLLERYERYSFAERQLVPTDHTSPGSWTLEHAKLKARLEVLQRNQKHYVGEDLESLNMKELQNLEHQLDSALKHIRSRKNQLMHESISVLQKQDRALQEQNNQLSKKVKEREKEVAQQNQWDQQNHEINSSTFVLPQQLDSPHLGEAYQNTNVVDNGEVEGGNSSQQQGAANNTVMPQWMLRHLNG.

The MADS-box domain maps to 3–57 (RGRVQLKRIENKINRQVTFSKRRSGLLKKAHEISVLCDAEVGLIVFSTKGKLFEY). The region spanning 88–178 (PGSWTLEHAK…SKKVKEREKE (91 aa)) is the K-box domain.

Abundant in vegetative organs.

The protein resides in the nucleus. In terms of biological role, probable transcription factor. This Solanum tuberosum (Potato) protein is Agamous-like MADS-box protein AGL8 homolog.